The following is a 796-amino-acid chain: Probable phosphoketolase 2 (796 aa).

It belongs to the XFP family. It depends on thiamine diphosphate as a cofactor.

This Lactiplantibacillus plantarum (strain ATCC BAA-793 / NCIMB 8826 / WCFS1) (Lactobacillus plantarum) protein is Probable phosphoketolase 2.